The chain runs to 92 residues: Secreted RxLR effector protein 21 (92 aa).

The N-terminal stretch at 1 to 21 (MNLSTLLLTLACISQLHGGSA) is a signal peptide. The RxLR motif lies at 30 to 33 (RQLR).

The protein belongs to the RxLR effector family.

The protein localises to the secreted. It localises to the host nucleus. The protein resides in the host cytoplasm. Functionally, secreted effector that completely suppresses the host cell death induced by cell death-inducing proteins. This Plasmopara viticola (Downy mildew of grapevine) protein is Secreted RxLR effector protein 21.